A 34-amino-acid polypeptide reads, in one-letter code: Photosystem II reaction center protein Y (34 aa).

Residues 1–4 (MDIR) lie on the Lumenal side of the membrane. Residues 5–23 (LLIVLLPVLAAASWALYNI) traverse the membrane as a helical segment. The Stromal segment spans residues 24 to 34 (GRVALQQFRSM).

The protein belongs to the PsbY family. As to quaternary structure, PSII is composed of 1 copy each of membrane proteins PsbA, PsbB, PsbC, PsbD, PsbE, PsbF, PsbH, PsbI, PsbJ, PsbK, PsbL, PsbM, PsbT, PsbX, PsbY, PsbZ, Psb30/Ycf12, at least 3 peripheral proteins of the oxygen-evolving complex and a large number of cofactors. It forms dimeric complexes.

The protein localises to the plastid. Its subcellular location is the chloroplast thylakoid membrane. In terms of biological role, loosely associated component of the core of photosystem II (PSII), it is not always seen in crystals. PSII is a light-driven water plastoquinone oxidoreductase, using light energy to abstract electrons from H(2)O, generating a proton gradient subsequently used for ATP formation. The sequence is that of Photosystem II reaction center protein Y from Gracilaria tenuistipitata var. liui (Red alga).